We begin with the raw amino-acid sequence, 373 residues long: 3 beta-hydroxysteroid dehydrogenase/Delta 5--&gt;4-isomerase type 1 (373 aa).

NADP(+) is bound by residues 10–15 (GAGGFL), Tyr155, and Lys159. Lys159 functions as the Proton donor in the catalytic mechanism. Residues 288–308 (VALLYWLGFLLELVSFLLRPV) traverse the membrane as a helical segment.

It belongs to the 3-beta-HSD family. High levels in adrenal gland, kidney and male liver. Low levels in female liver.

It localises to the endoplasmic reticulum membrane. Its subcellular location is the mitochondrion membrane. It carries out the reaction a 3beta-hydroxy-Delta(5)-steroid + NAD(+) = a 3-oxo-Delta(5)-steroid + NADH + H(+). The enzyme catalyses pregnenolone + NAD(+) = pregn-5-ene-3,20-dione + NADH + H(+). It catalyses the reaction 3beta-hydroxyandrost-5-en-17-one + NAD(+) = androst-5-ene-3,17-dione + NADH + H(+). The catalysed reaction is androst-5-en-3beta,17beta-diol + NAD(+) = 17beta-hydroxy-androst-5-en-3-one + NADH + H(+). It carries out the reaction a 3beta-hydroxysteroid + NADP(+) = a 3-oxosteroid + NADPH + H(+). The enzyme catalyses 5alpha-androstane-3beta,17beta-diol + NADP(+) = 17beta-hydroxy-5alpha-androstan-3-one + NADPH + H(+). It catalyses the reaction 3beta-hydroxy-5alpha-androstan-17-one + NADP(+) = 5alpha-androstan-3,17-dione + NADPH + H(+). The catalysed reaction is a 3-oxo-Delta(5)-steroid = a 3-oxo-Delta(4)-steroid. It carries out the reaction pregn-5-ene-3,20-dione = progesterone. The enzyme catalyses androst-5-ene-3,17-dione = androst-4-ene-3,17-dione. It catalyses the reaction 17beta-hydroxy-androst-5-en-3-one = testosterone. The catalysed reaction is 5alpha-androstane-3beta,17beta-diol + NAD(+) = 17beta-hydroxy-5alpha-androstan-3-one + NADH + H(+). Its pathway is steroid hormone biosynthesis. It participates in steroid metabolism. In terms of biological role, a bifunctional enzyme responsible for the oxidation and isomerization of 3beta-hydroxy-Delta(5)-steroid precursors to 3-oxo-Delta(4)-steroids, an essential step in steroid hormone biosynthesis. Specifically catalyzes the conversion of pregnenolone to progesterone, 17alpha-hydroxypregnenolone to 17alpha-hydroxyprogesterone, dehydroepiandrosterone (DHEA) to 4-androstenedione, and androstenediol to testosterone. Additionally, catalyzes the interconversion between 3beta-hydroxy and 3-oxo-5alpha-androstane steroids controlling the bioavalability of the active forms. Specifically converts dihydrotestosterone to its inactive form 5alpha-androstanediol, that does not bind androgen receptor/AR. Also converts androstanedione, a precursor of testosterone and estrone, to epiandrosterone. Expected to use NAD(+) as preferred electron donor for the 3-beta-hydroxy-steroid dehydrogenase activity and NADPH for the 3-ketosteroid reductase activity. This chain is 3 beta-hydroxysteroid dehydrogenase/Delta 5--&gt;4-isomerase type 1 (HSD3B1), found in Mesocricetus auratus (Golden hamster).